The primary structure comprises 99 residues: UPF0751 protein BCE_A0020 (99 aa).

It belongs to the UPF0751 family.

The sequence is that of UPF0751 protein BCE_A0020 from Bacillus cereus (strain ATCC 10987 / NRS 248).